The primary structure comprises 240 residues: uncharacterized protein (240 aa).

A compositionally biased stretch (polar residues) spans 197–210 (PLKSHSASRLNHLT). The interval 197 to 222 (PLKSHSASRLNHLTPSPRPGETPLEN) is disordered.

This is an uncharacterized protein from Caenorhabditis elegans.